Consider the following 300-residue polypeptide: 7-methylguanosine phosphate-specific 5'-nucleotidase (300 aa).

D41 acts as the Nucleophile in catalysis. 2 residues coordinate Mg(2+): D41 and D43. Residue D43 is the Proton donor of the active site. CMP is bound at residue E88. E88 is a binding site for N(7)-methyl-GMP. Substrate is bound by residues 156 to 157 (SA) and K205. D230 contributes to the Mg(2+) binding site. Position 256 is an N6-acetyllysine (K256).

Belongs to the pyrimidine 5'-nucleotidase family. As to quaternary structure, monomer.

It localises to the cytoplasm. It carries out the reaction N(7)-methyl-GMP + H2O = N(7)-methylguanosine + phosphate. The catalysed reaction is CMP + H2O = cytidine + phosphate. The enzyme catalyses a ribonucleoside 5'-phosphate + H2O = a ribonucleoside + phosphate. Its function is as follows. Specifically hydrolyzes 7-methylguanosine monophosphate (m(7)GMP) to 7-methylguanosine and inorganic phosphate. The specific activity for m(7)GMP may protect cells against undesired salvage of m(7)GMP and its incorporation into nucleic acids. Also has weak activity for CMP. UMP and purine nucleotides are poor substrates. In Rattus norvegicus (Rat), this protein is 7-methylguanosine phosphate-specific 5'-nucleotidase (Nt5c3b).